The following is a 397-amino-acid chain: LIM/homeobox protein Lhx9 (397 aa).

2 LIM zinc-binding domains span residues 69 to 130 (ALCA…RFSV) and 131 to 193 (QRCA…LLQG). Disordered stretches follow at residues 248–272 (ENEA…RMRT), 330–365 (ENGG…LTDL), and 378–397 (SNMD…TNLF). Positions 267–326 (TKRMRTSFKHHQLRTMKSYFAINHNPDAKDLKQLAQKTGLTKRVLQVWFQNARAKFRRNL) form a DNA-binding region, homeobox. Positions 353 to 365 (LTPPGTATTLTDL) are enriched in low complexity. A compositionally biased stretch (polar residues) spans 387 to 397 (SPSQTTLTNLF).

As to quaternary structure, interacts with LDB1 and LDB2. Expressed in the dorsal thalamus and inner nuclei of the cerebellum.

Its subcellular location is the nucleus. Its function is as follows. Involved in gonadal development. This is LIM/homeobox protein Lhx9 (Lhx9) from Mus musculus (Mouse).